The sequence spans 136 residues: uncharacterized protein (136 aa).

Residues 14–34 traverse the membrane as a helical segment; sequence ASVFAFFVLFLFCLKIILVLF.

The protein resides in the membrane. This is an uncharacterized protein from Mycoplasma genitalium (strain ATCC 33530 / DSM 19775 / NCTC 10195 / G37) (Mycoplasmoides genitalium).